Here is a 678-residue protein sequence, read N- to C-terminus: Glycine--tRNA ligase beta subunit (678 aa).

Belongs to the class-II aminoacyl-tRNA synthetase family. In terms of assembly, tetramer of two alpha and two beta subunits.

Its subcellular location is the cytoplasm. It catalyses the reaction tRNA(Gly) + glycine + ATP = glycyl-tRNA(Gly) + AMP + diphosphate. This Streptococcus thermophilus (strain ATCC BAA-491 / LMD-9) protein is Glycine--tRNA ligase beta subunit.